The following is an 812-amino-acid chain: Toll-like receptor 10 (812 aa).

Positions 1-19 (MRYIRSIYIFCSIVTSVRS) are cleaved as a signal peptide. Topologically, residues 20-577 (GASELPEERE…VHLPEISCNT (558 aa)) are extracellular. LRR repeat units follow at residues 24 to 46 (LPEERELTTNFSSMSLTKVPEGL), 49 to 70 (ITTTLDLSYNLLFQLQHSDFRS), 73 to 94 (KLKVLILCHNRIQELDIKTFEF), 97 to 118 (ELSYLDVSNNRLKSVTWFSLAG), and 119 to 139 (LRHLDLSFNDFDTLPISVETG). Asn-33 carries N-linked (GlcNAc...) asparagine glycosylation. N-linked (GlcNAc...) asparagine glycosylation occurs at Asn-140. The stretch at 143 to 166 (HLETLGLSGAKIQKSDFQKIAHLQ) is one LRR 6 repeat. N-linked (GlcNAc...) asparagine glycosylation is present at Asn-189. LRR repeat units follow at residues 296–321 (SNTVMRTIKLEHVHFRIFNIPQESIY), 325–348 (TKMDIENLTISDAQMPHMLFPMYP), 350–373 (RFQYLNFANNILTDDVFKKSIQLP), and 374–395 (HLKTLILKDNKLETLSLVSHFA). Residue Asn-331 is glycosylated (N-linked (GlcNAc...) asparagine). Asn-397 carries an N-linked (GlcNAc...) asparagine glycan. LRR repeat units lie at residues 399-420 (SLRHLDLSENLLQHENDENCLW), 423-443 (TLVTMNLSFNKFADSVFGCLP), 445-467 (NIQILDLNSNKIQTVPKAITHLT), 468-489 (SLRELNLAFNFLTDLPGCSHFR), and 490-510 (RLLVLNVEMNLILSSSLDFFQ). Asn-428 is a glycosylation site (N-linked (GlcNAc...) asparagine). One can recognise an LRRCT domain in the interval 523–577 (NPFRCTCELRDFIQLGKYSEGMMVGWSDSYICEYPLNLKGTQLKDVHLPEISCNT). A helical transmembrane segment spans residues 578 to 598 (GLLIVTIVVVMLVLGMAVAFC). The Cytoplasmic portion of the chain corresponds to 599 to 812 (CLHFDLPWYL…AISLIRTDCL (214 aa)). The region spanning 633–776 (VQFHVFISYS…LFWANLRAAL (144 aa)) is the TIR domain.

The protein belongs to the Toll-like receptor family. As to quaternary structure, binds MYD88 via their respective TIR domains.

It is found in the membrane. Its function is as follows. Participates in the innate immune response to microbial agents. Acts via MYD88 and TRAF6, leading to NF-kappa-B activation, cytokine secretion and the inflammatory response. This chain is Toll-like receptor 10 (TLR10), found in Bos taurus (Bovine).